The primary structure comprises 531 residues: Chaperonin GroEL 2 (531 aa).

ATP-binding positions include 30-33, 87-91, Gly414, and Asp494; these read TLGP and DGTTT.

The protein belongs to the chaperonin (HSP60) family. In terms of assembly, forms a cylinder of 14 subunits composed of two heptameric rings stacked back-to-back. Interacts with the co-chaperonin GroES.

It is found in the cytoplasm. It carries out the reaction ATP + H2O + a folded polypeptide = ADP + phosphate + an unfolded polypeptide.. Together with its co-chaperonin GroES, plays an essential role in assisting protein folding. The GroEL-GroES system forms a nano-cage that allows encapsulation of the non-native substrate proteins and provides a physical environment optimized to promote and accelerate protein folding. This chain is Chaperonin GroEL 2, found in Cutibacterium acnes (strain DSM 16379 / KPA171202) (Propionibacterium acnes).